The chain runs to 359 residues: Quinolinate synthase (359 aa).

The iminosuccinate site is built by His81 and Ser99. Cys144 is a binding site for [4Fe-4S] cluster. Residues 170-172 (YVN) and Ser187 contribute to the iminosuccinate site. Residue Cys229 coordinates [4Fe-4S] cluster. Iminosuccinate contacts are provided by residues 255–257 (HPE) and Thr272. Residue Cys315 coordinates [4Fe-4S] cluster.

It belongs to the quinolinate synthase family. Type 2 subfamily. Requires [4Fe-4S] cluster as cofactor.

The protein resides in the cytoplasm. It catalyses the reaction iminosuccinate + dihydroxyacetone phosphate = quinolinate + phosphate + 2 H2O + H(+). It functions in the pathway cofactor biosynthesis; NAD(+) biosynthesis; quinolinate from iminoaspartate: step 1/1. In terms of biological role, catalyzes the condensation of iminoaspartate with dihydroxyacetone phosphate to form quinolinate. The protein is Quinolinate synthase of Sinorhizobium medicae (strain WSM419) (Ensifer medicae).